A 368-amino-acid polypeptide reads, in one-letter code: Chaperone protein DnaJ (368 aa).

The region spanning 5-70 (DYYQVLGVPR…KKRKLYDTHG (66 aa)) is the J domain. The CR-type zinc finger occupies 124 to 201 (GVERQIQIPT…CNGAGRVEDH (78 aa)). Residues C137, C140, C153, C156, C175, C178, C189, and C192 each coordinate Zn(2+). CXXCXGXG motif repeat units lie at residues 137–144 (CTHCHGSG), 153–160 (CGTCRGSG), 175–182 (CPHCGGRG), and 189–196 (CKVCNGAG).

Belongs to the DnaJ family. In terms of assembly, homodimer. Zn(2+) serves as cofactor.

It is found in the cytoplasm. Participates actively in the response to hyperosmotic and heat shock by preventing the aggregation of stress-denatured proteins and by disaggregating proteins, also in an autonomous, DnaK-independent fashion. Unfolded proteins bind initially to DnaJ; upon interaction with the DnaJ-bound protein, DnaK hydrolyzes its bound ATP, resulting in the formation of a stable complex. GrpE releases ADP from DnaK; ATP binding to DnaK triggers the release of the substrate protein, thus completing the reaction cycle. Several rounds of ATP-dependent interactions between DnaJ, DnaK and GrpE are required for fully efficient folding. Also involved, together with DnaK and GrpE, in the DNA replication of plasmids through activation of initiation proteins. This is Chaperone protein DnaJ from Xylella fastidiosa (strain M23).